We begin with the raw amino-acid sequence, 135 residues long: Large ribosomal subunit protein eL27 (135 aa).

Belongs to the eukaryotic ribosomal protein eL27 family.

This chain is Large ribosomal subunit protein eL27 (RPL27), found in Pisum sativum (Garden pea).